We begin with the raw amino-acid sequence, 496 residues long: Cytochrome P450 71D178 (496 aa).

Residues 1–21 (MDISISWVVIILLVLSYLILM) form a helical; Signal-anchor for type II membrane protein membrane-spanning segment. Cys-435 is a heme binding site.

It belongs to the cytochrome P450 family. Heme is required as a cofactor. Expressed in flowers, leaves and stems, especially in glandular trichomes.

The protein resides in the membrane. The catalysed reaction is (4S)-limonene + reduced [NADPH--hemoprotein reductase] + O2 = (1S,5R)-carveol + oxidized [NADPH--hemoprotein reductase] + H2O + H(+). The enzyme catalyses gamma-terpinene + 2 reduced [NADPH--hemoprotein reductase] + 2 O2 = carvacrol + 2 oxidized [NADPH--hemoprotein reductase] + 3 H2O + 2 H(+). It carries out the reaction gamma-terpinene + 2 reduced [NADPH--hemoprotein reductase] + 2 O2 = thymol + 2 oxidized [NADPH--hemoprotein reductase] + 3 H2O + 2 H(+). It catalyses the reaction (4R)-limonene + reduced [NADPH--hemoprotein reductase] + O2 = (1R,6S)-isopiperitenol + oxidized [NADPH--hemoprotein reductase] + H2O + H(+). Its pathway is secondary metabolite biosynthesis; terpenoid biosynthesis. In terms of biological role, involved in the biosynthesis of phenolic monoterpenes natural products thymol and carvacrol which have a broad range of biological activities acting as antimicrobial compounds, insecticides, antioxidants and pharmaceutical agents. Catalyzes the C2- and C3-hydroxylation of gamma-terpinene to produce carvacrol and thymol, respectively. Also mediates the C6-hydroxylation of (4S)-limonene to form carveol and the C3-hydroxylation of (4R)-limonene to generate (+)-trans-isopiperitenol. The protein is Cytochrome P450 71D178 of Origanum vulgare (Wild marjoram).